A 237-amino-acid chain; its full sequence is Pyridoxal phosphate homeostasis protein (237 aa).

An N6-(pyridoxal phosphate)lysine modification is found at lysine 31.

The protein belongs to the pyridoxal phosphate-binding protein YggS/PROSC family.

The protein resides in the cytoplasm. The protein localises to the nucleus. In terms of biological role, pyridoxal 5'-phosphate (PLP)-binding protein, which may be involved in intracellular homeostatic regulation of pyridoxal 5'-phosphate (PLP), the active form of vitamin B6. This Schizosaccharomyces pombe (strain 972 / ATCC 24843) (Fission yeast) protein is Pyridoxal phosphate homeostasis protein.